Here is a 599-residue protein sequence, read N- to C-terminus: Probable acetolactate synthase large subunit (599 aa).

Glutamate 47 is a thiamine diphosphate binding site. Residues arginine 149, 258-279 (HGTKPANYCLSESDVLISIGCR), and 301-320 (DIDPAEIGKNVNVDVPIVGD) contribute to the FAD site. Residues 404-484 (QNQMWMAHYF…VVICIFDNRT (81 aa)) form a thiamine pyrophosphate binding region. Mg(2+) is bound by residues aspartate 455 and asparagine 482.

Belongs to the TPP enzyme family. Dimer of large and small chains. It depends on Mg(2+) as a cofactor. Thiamine diphosphate serves as cofactor.

The enzyme catalyses 2 pyruvate + H(+) = (2S)-2-acetolactate + CO2. It functions in the pathway amino-acid biosynthesis; L-isoleucine biosynthesis; L-isoleucine from 2-oxobutanoate: step 1/4. Its pathway is amino-acid biosynthesis; L-valine biosynthesis; L-valine from pyruvate: step 1/4. This is Probable acetolactate synthase large subunit (ilvB) from Methanococcus aeolicus.